A 1782-amino-acid polypeptide reads, in one-letter code: Signal-induced proliferation-associated 1-like protein 1 (1782 aa).

Disordered stretches follow at residues 1–28, 47–125, and 140–171; these read MTSL…GAPK, GSSV…VSLN, and KNKT…RRIR. Over residues 84–94 the composition is skewed to basic and acidic residues; it reads PPRKENVKESS. A compositionally biased stretch (low complexity) spans 95–125; that stretch reads RSSQEIETSSCLESLSSKGSPVSQGSSVSLN. 6 positions are modified to phosphoserine: Ser162, Ser187, Ser193, Ser208, Ser255, and Ser288. The interval 277–297 is disordered; it reads EREKPLKRRSKSETGDSSIFR. The 218-residue stretch at 599 to 816 folds into the Rap-GAP domain; that stretch reads LMKLDEQGLN…RTRQEYLKDL (218 aa). Positions 953 to 1031 constitute a PDZ domain; it reads EMTLRRNGLG…VVIIPPHDDC (79 aa). Disordered regions lie at residues 1069–1128 and 1144–1213; these read QRNA…RLSP and SQCR…SLAD. Phosphoserine is present on residues Ser1078, Ser1087, Ser1116, Ser1127, Ser1149, Ser1170, and Ser1181. Positions 1080-1093 are enriched in polar residues; the sequence is QVPSQLQSPMTSRL. Positions 1149 to 1159 are enriched in low complexity; sequence SPSNLSSSSET. Residues 1186–1205 are compositionally biased toward polar residues; sequence DRQNTQSDISGSGKSTPSWQ. Residues Ser1234 and Ser1249 each carry the phosphoserine modification. The interval 1247–1285 is disordered; it reads HLSPNKQGHSDSHYSSHSSSNTLSSNASSAHSDEKWYDG. Over residues 1261–1276 the composition is skewed to low complexity; sequence SSHSSSNTLSSNASSA. Position 1305 is a phosphoserine; by PLK2 (Ser1305). A disordered region spans residues 1307–1342; that stretch reads IDTASYGPSHGSTASLGASTSSPRSGPGKEKVAPLW. A Phosphothreonine; by PLK2 modification is found at Thr1309. Residues 1315–1328 show a composition bias toward low complexity; that stretch reads SHGSTASLGASTSS. Ser1328 carries the post-translational modification Phosphoserine; by CDK5. Ser1345 is modified (phosphoserine). Residues 1358–1368 are compositionally biased toward basic and acidic residues; sequence TEGHGMDRKAE. Residues 1358-1454 form a disordered region; the sequence is TEGHGMDRKA…SSSGPRTFYP (97 aa). Residues Ser1369, Ser1370, Ser1391, Ser1410, and Ser1412 each carry the phosphoserine modification. Polar residues predominate over residues 1378-1410; sequence KSQGGSSPLSRENSTFSINDAASHTSTMSSRHS. The segment covering 1432–1447 has biased composition (low complexity); that stretch reads SSQLAPSFSSSSSSSS. 2 positions are modified to phosphoserine: Ser1507 and Ser1528. Thr1530 is subject to Phosphothreonine. Phosphoserine is present on residues Ser1533, Ser1544, Ser1547, Ser1564, and Ser1567. Position 1580 is an asymmetric dimethylarginine (Arg1580). Ser1582, Ser1624, Ser1626, Ser1629, Ser1687, Ser1690, Ser1707, Ser1708, and Ser1712 each carry phosphoserine. Positions 1625–1647 are disordered; the sequence is ASDSSLTDIQETRRQPIPDPGLM. The stretch at 1713–1773 forms a coiled coil; it reads PTLASKVDQL…ASDKLKKFTE (61 aa).

As to quaternary structure, interacts with DLG4, PDLIM5, PDLIM7 and LZTS3. Interacts with the actin cytoskeleton. Interacts (via PDZ domain) with EPHA4 (via PDZ motif); controls neuronal morphology through regulation of the RAP1 (RAP1A or RAP1B) and RAP2 (RAP2A, RAP2B or RAP2C) GTPases. Post-translationally, ubiquitinated and degraded by the SCF(BTRC) following phosphorylation by PLK2. Phosphorylated at Ser-1328 by CDK5, creating a docking site for the POLO box domains of PLK2. Subsequently, PLK2 binds and phosphorylates SIPA1L1, leading to ubiquitination and degradation by the proteasome.

The protein resides in the cytoplasm. It is found in the cytoskeleton. It localises to the postsynaptic density. Its subcellular location is the synapse. The protein localises to the synaptosome. Stimulates the GTPase activity of RAP2A. Promotes reorganization of the actin cytoskeleton and recruits DLG4 to F-actin. Contributes to the regulation of dendritic spine morphogenesis. This is Signal-induced proliferation-associated 1-like protein 1 (Sipa1l1) from Mus musculus (Mouse).